The chain runs to 546 residues: Chaperonin GroEL (546 aa).

ATP is bound by residues 30-33 (TLGP), Lys-51, 87-91 (DGTTT), Gly-415, 479-481 (NAA), and Asp-495.

This sequence belongs to the chaperonin (HSP60) family. Forms a cylinder of 14 subunits composed of two heptameric rings stacked back-to-back. Interacts with the co-chaperonin GroES.

The protein resides in the cytoplasm. The catalysed reaction is ATP + H2O + a folded polypeptide = ADP + phosphate + an unfolded polypeptide.. In terms of biological role, together with its co-chaperonin GroES, plays an essential role in assisting protein folding. The GroEL-GroES system forms a nano-cage that allows encapsulation of the non-native substrate proteins and provides a physical environment optimized to promote and accelerate protein folding. The chain is Chaperonin GroEL from Pseudomonas putida (strain ATCC 700007 / DSM 6899 / JCM 31910 / BCRC 17059 / LMG 24140 / F1).